A 296-amino-acid chain; its full sequence is Testis-expressed protein 26 (296 aa).

5 mn regions span residues 30–42 (ATTM…PKRG), 69–83 (ESQY…LRSK), 140–153 (ISCT…LTQS), 175–189 (DTEF…AQIP), and 229–243 (QTTY…CLDF).

In Mus musculus (Mouse), this protein is Testis-expressed protein 26 (Tex26).